Reading from the N-terminus, the 907-residue chain is MEVQLGLGRVYPRPPSKTYRGAFQNLFQSVREVIQNPGPRHPEAVSAAPPGAHLQQQQQQQQQQETSPRQQQQQQQGDDGSPQAQSRGPTGYLALDEEQQPSQQRSASKGHPESACVPEPGVTSATGKGLQQQQPAPPDENDSAAPSTLSLLGPTFPGLSSCSTDLKDILSEAGTMQLLQQQRQQQQQQQQQQQQQQQQQQQEVVSEGSSSGRAREAAGASTSSKDSYLGGSSTISDSAKELCKAVSVSMGLGVEALEHLSPGEQLRGDCMYAPLLGGPPAVRPCAPLAECKGSLLDDGPGKGTEETAEYSPFKAGYAKGLDGDSLGCSSSSEAGGSGTLEMPSTLSLYKSGALDEAAAYQSRDYYNFPLSLGGPPPHPPPPHPHTRIKLENPLDYGSAWAAAAAQCRYGDLASLHGAGAAGPSSGSPSATTSSSWHTLFTAEEGQLYGPCGGSGGGSAGDGGSVAPYGYTRPPQGLAGQEGDFPPPDVWYPGGVVSRVPFPSPSCVKSEMGSWMESYSGPYGDMRLETARDHVLPIDYYFPPQKTCLICGDEASGCHYGALTCGSCKVFFKRAAEGKQKYLCASRNDCTIDKFRRKNCPSCRLRKCYEAGMTLGARKLKKLGNLKLQEEGEASNVTSPTEEPTQKLTVSHIEGYECQPIFLNVLEAIEPGVVCAGHDNNQPDSFAALLSSLNELGERQLVHVVKWAKALPGFRNLHVDDQMAVIQYSWMGLMVFAMGWRSFTNVNSRMLYFAPDLVFNEYRMHKSRMYSQCVRMRHLSQEFGWLQITPQEFLCMKALLLFSIIPVDGLKNQKFFDELRMNYIKELDRIIACKRKNPTSCSRRFYQLTKLLDSVQPIARELHQFTFDLLIKSHMVSVDFPEMMAEIISVQVPKILSGKVKPIYFHTQ.

The tract at residues 1-545 is modulating; the sequence is MEVQLGLGRV…PIDYYFPPQK (545 aa). An interaction with ZNF318 region spans residues 1–574; that stretch reads MEVQLGLGRV…GSCKVFFKRA (574 aa). Disordered stretches follow at residues 36 to 152 and 200 to 231; these read NPGP…LSLL and QQQE…YLGG. A compositionally biased stretch (low complexity) spans 55 to 76; it reads QQQQQQQQQQETSPRQQQQQQQ. A Phosphoserine; by CDK9 modification is found at serine 67. Serine 81 carries the phosphoserine modification. Polar residues predominate over residues 123–134; sequence TSATGKGLQQQQ. Residues 200–224 are compositionally biased toward low complexity; sequence QQQEVVSEGSSSGRAREAAGASTSS. Phosphotyrosine; by CSK is present on tyrosine 228. Phosphoserine is present on serine 261. At tyrosine 272 the chain carries Phosphotyrosine; by CSK and TNK2. Residues tyrosine 310, tyrosine 349, tyrosine 360, and tyrosine 365 each carry the phosphotyrosine; by CSK modification. Position 366 is a phosphotyrosine; by CSK and TNK2 (tyrosine 366). Lysine 389 is covalently cross-linked (Glycyl lysine isopeptide (Lys-Gly) (interchain with G-Cter in SUMO)). Tyrosine 396 carries the phosphotyrosine; by CSK modification. Lysine 508 participates in a covalent cross-link: Glycyl lysine isopeptide (Lys-Gly) (interchain with G-Cter in SUMO). Phosphotyrosine; by CSK is present on residues tyrosine 522 and tyrosine 539. Positions 539–906 are interaction with LPXN; it reads YYFPPQKTCL…GKVKPIYFHT (368 aa). Residues 546–619 constitute a DNA-binding region (nuclear receptor); sequence TCLICGDEAS…AGMTLGARKL (74 aa). 2 consecutive NR C4-type zinc fingers follow at residues 547-567 and 583-607; these read CLIC…CGSC and CASR…LRKC. The segment at 559–649 is interaction with HIPK3; that stretch reads YGALTCGSCK…TEEPTQKLTV (91 aa). Residues 579 to 906 are interaction with CCAR1; sequence QKYLCASRND…GKVKPIYFHT (328 aa). Positions 612–906 are interaction with KAT7; the sequence is MTLGARKLKK…GKVKPIYFHT (295 aa). At serine 638 the chain carries Phosphoserine; by STK4/MST1. Positions 656-887 constitute an NR LBD domain; it reads ECQPIFLNVL…DFPEMMAEII (232 aa). The 17beta-hydroxy-5alpha-androstan-3-one site is built by asparagine 693 and arginine 740. Residues lysine 833 and lysine 835 each participate in a glycyl lysine isopeptide (Lys-Gly) (interchain with G-Cter in ubiquitin) cross-link. 17beta-hydroxy-5alpha-androstan-3-one is bound at residue threonine 865. Residue tyrosine 903 is modified to Phosphotyrosine; by CSK.

This sequence belongs to the nuclear hormone receptor family. NR3 subfamily. Binds DNA as a homodimer. Part of a ternary complex containing AR, EFCAB6/DJBP and PARK7. Interacts with HIPK3 and NR0B2 in the presence of androgen. The ligand binding domain interacts with KAT7/HBO1 in the presence of dihydrotestosterone. Interacts with EFCAB6/DJBP, PQBP1, RANBP9, RBAK, SPDEF, SRA1, TGFB1I1 and RREB1. Interacts with ZMIZ1/ZIMP10 and ZMIZ2/ZMIP7 which both enhance its transactivation activity. Interacts with SLC30A9 and RAD54L2/ARIP4. Interacts with MACROD1 (via macro domain). Interacts via the ligand-binding domain with LXXLL and FXXLF motifs from NCOA1, NCOA2, NCOA3 and MAGEA11. Interacts (via nuclear receptor DNA binding domain and nuclear receptor ligand binding domain) with NCOA4. The AR N-terminal poly-Gln region binds Ran resulting in enhancement of AR-mediated transactivation. Ran-binding decreases as the poly-Gln length increases. Interacts with HIP1 (via coiled coil domain). Interacts (via ligand-binding domain) with TRIM68. Interacts with TNK2. Interacts with USP26. Interacts with RNF6. Interacts (regulated by RNF6 probably through polyubiquitination) with RNF14; regulates AR transcriptional activity. Interacts with PRMT2 and TRIM24. Interacts with RACK1. Interacts with RANBP10; this interaction enhances dihydrotestosterone-induced AR transcriptional activity. Interacts with PRPF6 in a hormone-independent way; this interaction enhances dihydrotestosterone-induced AR transcriptional activity. Interacts with STK4/MST1. Interacts with ZIPK/DAPK3. Interacts with LPXN. Interacts with MAK. Part of a complex containing AR, MAK and NCOA3. Interacts with CRY1. Interacts with CCAR1 and GATA2. Interacts with ZNF318. Interacts with BUD31. Interacts with ARID4A. Interacts with ARID4B. Interacts (via NR LBD domain) with ZBTB7A; the interaction is direct and androgen-dependent. Interacts with NCOR1. Interacts with NCOR2. Interacts witH CRY2 in a ligand-dependent manner. Post-translationally, phosphorylated in prostate cancer cells in response to several growth factors including EGF. Phosphorylation is induced by c-Src kinase (CSK). Tyr-522 is one of the major phosphorylation sites and an increase in phosphorylation and Src kinase activity is associated with prostate cancer progression. Phosphorylation by TNK2 enhances the DNA-binding and transcriptional activity. Phosphorylation at Ser-67 by CDK9 regulates AR promoter selectivity and cell growth. In terms of processing, sumoylated on Lys-389 (major) and Lys-508. Ubiquitinated. Deubiquitinated by USP26. 'Lys-6' and 'Lys-27'-linked polyubiquitination by RNF6 modulates AR transcriptional activity and specificity. Palmitoylated by ZDHHC7 and ZDHHC21. Palmitoylation is required for plasma membrane targeting and for rapid intracellular signaling via ERK and AKT kinases and cAMP generation.

It is found in the nucleus. The protein resides in the cytoplasm. Functionally, steroid hormone receptors are ligand-activated transcription factors that regulate eukaryotic gene expression and affect cellular proliferation and differentiation in target tissues. Transcription factor activity is modulated by bound coactivator and corepressor proteins like ZBTB7A that recruits NCOR1 and NCOR2 to the androgen response elements/ARE on target genes, negatively regulating androgen receptor signaling and androgen-induced cell proliferation. Transcription activation is also down-regulated by NR0B2. Activated, but not phosphorylated, by HIPK3 and ZIPK/DAPK3. In Canis lupus familiaris (Dog), this protein is Androgen receptor (AR).